We begin with the raw amino-acid sequence, 419 residues long: GTPase Obg (419 aa).

The Obg domain maps to 1 to 158 (MFVDQARIFV…KWIRLELKLL (158 aa)). The OBG-type G domain maps to 159 to 327 (ADVGLVGFPN…LMGKTYALLQ (169 aa)). Residues 165–172 (GFPNAGKS), 190–194 (FTTLV), 212–215 (DIPG), 282–285 (NKMD), and 308–310 (SAV) each bind GTP. Residues serine 172 and threonine 192 each coordinate Mg(2+). The 78-residue stretch at 342 to 419 (RRFEEELPFK…IKDFEFEFTE (78 aa)) folds into the OCT domain.

The protein belongs to the TRAFAC class OBG-HflX-like GTPase superfamily. OBG GTPase family. As to quaternary structure, monomer. It depends on Mg(2+) as a cofactor.

Its subcellular location is the cytoplasm. An essential GTPase which binds GTP, GDP and possibly (p)ppGpp with moderate affinity, with high nucleotide exchange rates and a fairly low GTP hydrolysis rate. Plays a role in control of the cell cycle, stress response, ribosome biogenesis and in those bacteria that undergo differentiation, in morphogenesis control. In Syntrophomonas wolfei subsp. wolfei (strain DSM 2245B / Goettingen), this protein is GTPase Obg.